We begin with the raw amino-acid sequence, 78 residues long: Beta-defensin 135 (78 aa).

The signal sequence occupies residues 1–24 (MATRSVLLALVVLNLLFYVPPGRS). 2 disulfides stabilise this stretch: Cys-37/Cys-64 and Cys-48/Cys-66.

The protein belongs to the beta-defensin family.

Its subcellular location is the secreted. Functionally, has antibacterial activity. In Pan troglodytes (Chimpanzee), this protein is Beta-defensin 135 (DEFB135).